Here is a 607-residue protein sequence, read N- to C-terminus: Elongation factor 4 (607 aa).

The region spanning 11 to 193 is the tr-type G domain; that stretch reads ENIRNFSIIA…KIVEVVPAPD (183 aa). GTP contacts are provided by residues 23–28 and 140–143; these read DHGKST and NKID.

Belongs to the TRAFAC class translation factor GTPase superfamily. Classic translation factor GTPase family. LepA subfamily.

The protein resides in the cell membrane. It carries out the reaction GTP + H2O = GDP + phosphate + H(+). In terms of biological role, required for accurate and efficient protein synthesis under certain stress conditions. May act as a fidelity factor of the translation reaction, by catalyzing a one-codon backward translocation of tRNAs on improperly translocated ribosomes. Back-translocation proceeds from a post-translocation (POST) complex to a pre-translocation (PRE) complex, thus giving elongation factor G a second chance to translocate the tRNAs correctly. Binds to ribosomes in a GTP-dependent manner. The sequence is that of Elongation factor 4 from Staphylococcus aureus (strain N315).